The sequence spans 249 residues: uncharacterized protein (249 aa).

Positions 30–65 (KVDKLKKLEIKKLEDQKKLKEQEEKHRLTLIRLANA) form a coiled coil. The segment at 66–97 (PPQTNSINNNNNNNNNIKTNRPPLIYGEDKDK) is disordered.

This is an uncharacterized protein from Dictyostelium discoideum (Social amoeba).